We begin with the raw amino-acid sequence, 213 residues long: Kynurenine formamidase (213 aa).

Residue Trp18 coordinates substrate. Zn(2+)-binding residues include His48, His52, and Asp54. His58 acts as the Proton donor/acceptor in catalysis. Zn(2+) contacts are provided by His160 and Glu172.

This sequence belongs to the Cyclase 1 superfamily. KynB family. Homodimer. The cofactor is Zn(2+).

The catalysed reaction is N-formyl-L-kynurenine + H2O = L-kynurenine + formate + H(+). Its pathway is amino-acid degradation; L-tryptophan degradation via kynurenine pathway; L-kynurenine from L-tryptophan: step 2/2. Functionally, catalyzes the hydrolysis of N-formyl-L-kynurenine to L-kynurenine, the second step in the kynurenine pathway of tryptophan degradation. The sequence is that of Kynurenine formamidase from Burkholderia multivorans (strain ATCC 17616 / 249).